The primary structure comprises 668 residues: tRNA 5-methylaminomethyl-2-thiouridine biosynthesis bifunctional protein MnmC (668 aa).

Residues 1-245 form a tRNA (mnm(5)s(2)U34)-methyltransferase region; sequence MKHYSIQPAN…KREMLCGVME (245 aa). Positions 270-668 are FAD-dependent cmnm(5)s(2)U34 oxidoreductase; it reads IGGGIASALL…LLKGKAVKAG (399 aa).

This sequence in the N-terminal section; belongs to the methyltransferase superfamily. tRNA (mnm(5)s(2)U34)-methyltransferase family. It in the C-terminal section; belongs to the DAO family. It depends on FAD as a cofactor.

The protein localises to the cytoplasm. It catalyses the reaction 5-aminomethyl-2-thiouridine(34) in tRNA + S-adenosyl-L-methionine = 5-methylaminomethyl-2-thiouridine(34) in tRNA + S-adenosyl-L-homocysteine + H(+). In terms of biological role, catalyzes the last two steps in the biosynthesis of 5-methylaminomethyl-2-thiouridine (mnm(5)s(2)U) at the wobble position (U34) in tRNA. Catalyzes the FAD-dependent demodification of cmnm(5)s(2)U34 to nm(5)s(2)U34, followed by the transfer of a methyl group from S-adenosyl-L-methionine to nm(5)s(2)U34, to form mnm(5)s(2)U34. This Escherichia coli (strain UTI89 / UPEC) protein is tRNA 5-methylaminomethyl-2-thiouridine biosynthesis bifunctional protein MnmC.